Consider the following 362-residue polypeptide: MKKMTITLGPRNYPITISSGLLNHFDSFEPLKKGDQGMLVTNQTLAPLYLSSIRTVLEQGGVRLDHIILPDGEKYKSLASIELIFTELLKKWHGRHTTLIAFGGGVIGDLTGFAAACYQRGIRYIQIPTTLLAQVDASIGGKTAVNHQLGKNMIGAFYQPASVIIDIDCLSHLPLRHFSSGLAEAIKYGIAFDFDFFCWLEANMDSLLRRDVDALSHCISRCCQIKSKIVMEDERDENGLRALLNLGHTYAHAIETETNYIFYLHGEAVSIGMLMAAQTAQKLGLFSKTDIIRIKKLLLRAKLPIQGFHQIDPKSCLLHMMHDKKVMNDKLRLIIPTAIGQSEIYEGIDNDIVLASIKETLM.

Residues 71–76 (DGEKYK), 105–109 (GVIGD), 129–130 (TT), Lys142, and Lys151 each bind NAD(+). Residues Glu184, His248, and His265 each coordinate Zn(2+).

This sequence belongs to the sugar phosphate cyclases superfamily. Dehydroquinate synthase family. It depends on Co(2+) as a cofactor. The cofactor is Zn(2+). NAD(+) serves as cofactor.

Its subcellular location is the cytoplasm. It carries out the reaction 7-phospho-2-dehydro-3-deoxy-D-arabino-heptonate = 3-dehydroquinate + phosphate. It participates in metabolic intermediate biosynthesis; chorismate biosynthesis; chorismate from D-erythrose 4-phosphate and phosphoenolpyruvate: step 2/7. Catalyzes the conversion of 3-deoxy-D-arabino-heptulosonate 7-phosphate (DAHP) to dehydroquinate (DHQ). The chain is 3-dehydroquinate synthase from Hamiltonella defensa subsp. Acyrthosiphon pisum (strain 5AT).